Reading from the N-terminus, the 444-residue chain is MQVTTEAVSGVARRLNVSVPTSRINEQFEARLKRTAKTAKINGFRPGKVPLSRVRSDFGPGIYQEVVNDIIRDTVFEAIQQEKINAVGMPNIEKVEHKDDALVYEATVEVYPEVEVKAFDTLEVERKAAEINDKDVDAMIENLQKQRQTWAVTKGMAKKDMQVTFDFEGEVDGEKFEGGSAEDFKLVLGSGRMIPGFEDGIIGMKAGEEKVIDVTFPEDYQAANLAGKAAKFKITVKQVEKPKLPEIDAEFLKIFGISEEDGVEKLKADVRKNMEREVRNGLRNQVKQAAFDALVAANEIDVPSAMVAQEIDRQREQMIQQFTQQFGGAGAQSFDKSMLPDELFKEQAEKSVKLGVLVSKVLADAKLEVDQARVDTYIDEMASSYEDPTEVVDYFKNDKQQRAQIEAVVLEDQVVDHILAAAKVTETEVSYDDLLKEQQARQAR.

A PPIase FKBP-type domain is found at 160-245; it reads DMQVTFDFEG…VKQVEKPKLP (86 aa).

Belongs to the FKBP-type PPIase family. Tig subfamily.

The protein localises to the cytoplasm. The catalysed reaction is [protein]-peptidylproline (omega=180) = [protein]-peptidylproline (omega=0). Its function is as follows. Involved in protein export. Acts as a chaperone by maintaining the newly synthesized protein in an open conformation. Functions as a peptidyl-prolyl cis-trans isomerase. This Acinetobacter baylyi (strain ATCC 33305 / BD413 / ADP1) protein is Trigger factor.